Reading from the N-terminus, the 342-residue chain is Glycerol-1-phosphate dehydrogenase [NAD(P)+] (342 aa).

NAD(+) is bound by residues 84–88 (GRPID) and 106–109 (TSAS). Position 111 (Asp111) interacts with substrate. An NAD(+)-binding site is contributed by Ser115. Asp160 is a binding site for substrate. Asp160 and His241 together coordinate Zn(2+). His245 lines the substrate pocket. His260 is a binding site for Zn(2+).

The protein belongs to the glycerol-1-phosphate dehydrogenase family. Homodimer. Requires Zn(2+) as cofactor.

The protein localises to the cytoplasm. It catalyses the reaction sn-glycerol 1-phosphate + NAD(+) = dihydroxyacetone phosphate + NADH + H(+). The catalysed reaction is sn-glycerol 1-phosphate + NADP(+) = dihydroxyacetone phosphate + NADPH + H(+). The protein operates within membrane lipid metabolism; glycerophospholipid metabolism. In terms of biological role, catalyzes the NAD(P)H-dependent reduction of dihydroxyacetonephosphate (DHAP or glycerone phosphate) to glycerol 1-phosphate (G1P). The G1P thus generated is used as the glycerophosphate backbone of phospholipids in the cellular membranes of Archaea. This is Glycerol-1-phosphate dehydrogenase [NAD(P)+] from Pyrobaculum arsenaticum (strain DSM 13514 / JCM 11321 / PZ6).